A 361-amino-acid chain; its full sequence is Chorismate synthase (361 aa).

2 residues coordinate NADP(+): R48 and R54. FMN contacts are provided by residues 125 to 127, 238 to 239, G278, 293 to 297, and R319; these read RSS, NA, and KPTSS.

Belongs to the chorismate synthase family. Homotetramer. It depends on FMNH2 as a cofactor.

The enzyme catalyses 5-O-(1-carboxyvinyl)-3-phosphoshikimate = chorismate + phosphate. Its pathway is metabolic intermediate biosynthesis; chorismate biosynthesis; chorismate from D-erythrose 4-phosphate and phosphoenolpyruvate: step 7/7. Its function is as follows. Catalyzes the anti-1,4-elimination of the C-3 phosphate and the C-6 proR hydrogen from 5-enolpyruvylshikimate-3-phosphate (EPSP) to yield chorismate, which is the branch point compound that serves as the starting substrate for the three terminal pathways of aromatic amino acid biosynthesis. This reaction introduces a second double bond into the aromatic ring system. The polypeptide is Chorismate synthase (Vibrio campbellii (strain ATCC BAA-1116)).